The sequence spans 88 residues: Cell division topological specificity factor (88 aa).

Belongs to the MinE family.

In terms of biological role, prevents the cell division inhibition by proteins MinC and MinD at internal division sites while permitting inhibition at polar sites. This ensures cell division at the proper site by restricting the formation of a division septum at the midpoint of the long axis of the cell. This is Cell division topological specificity factor from Aromatoleum aromaticum (strain DSM 19018 / LMG 30748 / EbN1) (Azoarcus sp. (strain EbN1)).